Here is a 349-residue protein sequence, read N- to C-terminus: Alcohol dehydrogenase 1 (349 aa).

Zn(2+)-binding residues include cysteine 46, histidine 69, cysteine 100, cysteine 103, cysteine 106, cysteine 114, and cysteine 156. NAD(+) is bound by residues 180–186, aspartate 204, lysine 208, 270–272, and arginine 342; these read GAGGGLG and VGL.

Belongs to the zinc-containing alcohol dehydrogenase family. Homotetramer. Zn(2+) is required as a cofactor.

The enzyme catalyses a primary alcohol + NAD(+) = an aldehyde + NADH + H(+). The catalysed reaction is a secondary alcohol + NAD(+) = a ketone + NADH + H(+). This is Alcohol dehydrogenase 1 from Caenorhabditis elegans.